Here is a 337-residue protein sequence, read N- to C-terminus: MPKQAIRIMDTTLRDGSHAIRHRFTKENVRQIVQALDEAGVPVIEVSHGDGLGGSSLQYGMSLVEEMELIEEAAKTSRRAKIAALLLPGIGTKKELQQAKDCGIQMVRIATQCSEADVSEQHFGLAKELGLETVGFLMMAHMLSPEELAQQAKLMESYGADIVYIVDSAGTMLPQDVIDRVIALKKVLNVPIGFHAHNNLGLAIGNSLAAIQAGATNIDASTRGLGAGSGNTQTEVLVAVLSRMGIETGIDLFQIMDAAEYIVDPLMDSPMIVNRDALTIGFTGVYSTFLWHAKQAGEKFGVDPREILIELGRRKAVAGQEDWILDVASDLSSAKGR.

A Pyruvate carboxyltransferase domain is found at 6–256 (IRIMDTTLRD…ETGIDLFQIM (251 aa)). 14–15 (RD) contacts substrate. Residue Asp-15 participates in Mn(2+) binding. His-18 serves as the catalytic Proton acceptor. 2 residues coordinate substrate: Ser-168 and His-195. 2 residues coordinate Mn(2+): His-195 and His-197. Residue Tyr-286 coordinates substrate.

The protein belongs to the 4-hydroxy-2-oxovalerate aldolase family.

It carries out the reaction (S)-4-hydroxy-2-oxopentanoate = acetaldehyde + pyruvate. The chain is 4-hydroxy-2-oxovalerate aldolase (nahM) from Geobacillus genomosp. 3.